A 205-amino-acid chain; its full sequence is Methylthioribulose-1-phosphate dehydratase (205 aa).

Residues histidine 96 and histidine 98 each contribute to the Zn(2+) site.

This sequence belongs to the aldolase class II family. MtnB subfamily. The cofactor is Zn(2+).

It carries out the reaction 5-(methylsulfanyl)-D-ribulose 1-phosphate = 5-methylsulfanyl-2,3-dioxopentyl phosphate + H2O. The protein operates within amino-acid biosynthesis; L-methionine biosynthesis via salvage pathway; L-methionine from S-methyl-5-thio-alpha-D-ribose 1-phosphate: step 2/6. Functionally, catalyzes the dehydration of methylthioribulose-1-phosphate (MTRu-1-P) into 2,3-diketo-5-methylthiopentyl-1-phosphate (DK-MTP-1-P). The protein is Methylthioribulose-1-phosphate dehydratase of Pseudomonas aeruginosa (strain UCBPP-PA14).